Reading from the N-terminus, the 258-residue chain is Capsid protein (258 aa).

The Bipartite nuclear localization signal motif lies at 3 to 20; sequence KRPGDIIISTPGSKVRRR. Residues 41-55 carry the Nuclear localization signal motif; it reads RKRAWMNRPMYRKPM. The segment at 69–86 is a zinc-finger region; that stretch reads CEGPCKVQSFEQRDDVKH. The Nuclear export signal signature appears at 102-123; it reads LTHRVGKRFCIKSIYILGKIWM. The Bipartite nuclear localization signal signature appears at 202-249; the sequence is KRFYRLNHHVTYNHQEAGKYENHTENALLLYMACTHASNPVYATLKIR.

Belongs to the geminiviridae capsid protein family. Homomultimer. Binds to single-stranded and double-stranded viral DNA. Interacts (via nuclear localization signals) with host importin alpha-1a.

The protein localises to the virion. It localises to the host nucleus. In terms of biological role, encapsidates the viral DNA into characteristic twinned ('geminate') particles. Binds the genomic viral ssDNA and shuttles it into and out of the cell nucleus. The CP of bipartite geminiviruses is not required for cell-to-cell or systemic movement. The polypeptide is Capsid protein (Hewittia sublobata (Coralbush)).